Consider the following 469-residue polypeptide: 3-isopropylmalate dehydratase large subunit (469 aa).

Positions 350, 410, and 413 each coordinate [4Fe-4S] cluster.

It belongs to the aconitase/IPM isomerase family. LeuC type 1 subfamily. As to quaternary structure, heterodimer of LeuC and LeuD. [4Fe-4S] cluster is required as a cofactor.

It carries out the reaction (2R,3S)-3-isopropylmalate = (2S)-2-isopropylmalate. The protein operates within amino-acid biosynthesis; L-leucine biosynthesis; L-leucine from 3-methyl-2-oxobutanoate: step 2/4. In terms of biological role, catalyzes the isomerization between 2-isopropylmalate and 3-isopropylmalate, via the formation of 2-isopropylmaleate. The polypeptide is 3-isopropylmalate dehydratase large subunit (Rhizobium etli (strain CIAT 652)).